We begin with the raw amino-acid sequence, 138 residues long: Protein X (138 aa).

Residues 24-48 (ESGGPAVSRPSAGSASRADSPLPSA) are disordered. Residues 68–113 (PCCLGFTCAEFGAMVSTMNFVTWHAKRQLGMPTKDLWTPYVRNQLL) are mitochondrial targeting sequence.

Belongs to the orthohepadnavirus protein X family. In terms of assembly, may form homodimer. May interact with host CEBPA, CFLAR, CREB1, DDB1, E4F1, HBXIP, HSPD1/HSP60, NFKBIA, POLR2E and SMAD4. Interacts with host SMC5-SMC6 complex and induces its degradation. Interacts with host TRPC4AP; leading to prevent ubiquitination of TRPC4AP. Interacts with host PLSCR1; this interaction promotes ubiquitination and degradation of HBx and impairs HBx-mediated cell proliferation. A fraction may be phosphorylated in insect cells and HepG2 cells, a human hepatoblastoma cell line. Phosphorylated in vitro by host protein kinase C or mitogen-activated protein kinase. N-acetylated in insect cells.

The protein localises to the host cytoplasm. It is found in the host nucleus. Its subcellular location is the host mitochondrion. In terms of biological role, multifunctional protein that plays a role in silencing host antiviral defenses and promoting viral transcription. Does not seem to be essential for HBV infection. May be directly involved in development of cirrhosis and liver cancer (hepatocellular carcinoma). Most of cytosolic activities involve modulation of cytosolic calcium. The effect on apoptosis is controversial depending on the cell types in which the studies have been conducted. May induce apoptosis by localizing in mitochondria and causing loss of mitochondrial membrane potential. May also modulate apoptosis by binding host CFLAR, a key regulator of the death-inducing signaling complex (DISC). Promotes viral transcription by using the host E3 ubiquitin ligase DDB1 to target the SMC5-SMC6 complex to proteasomal degradation. This host complex would otherwise bind to viral episomal DNA, and prevents its transcription. Moderately stimulates transcription of many different viral and cellular transcription elements. Promoters and enhancers stimulated by HBx contain DNA binding sites for NF-kappa-B, AP-1, AP-2, c-EBP, ATF/CREB, or the calcium-activated factor NF-AT. This is Protein X from Arctic squirrel hepatitis virus (ASHV).